Consider the following 190-residue polypeptide: MARANEIKRGMAVNYNGKLLLVRDIDIQSPSARGAATLYKMRFSDVRTGLKVEERFKGDDLLETITLSRRPVTFSYIDGDEYVFMDDEDYTPYTFKKEQIEDELLFIPEGGIPGMQVLTMEGQVLALELPQTVDMEIVETTPSIKGASASARTKPAAMSTGLVVQVPEYLSSGEKIRIHVEERRFMGRAD.

Belongs to the elongation factor P family.

The polypeptide is Elongation factor P-like protein (Edwardsiella ictaluri (strain 93-146)).